The sequence spans 418 residues: MSVIRIKTNATVVAVLPASEDQADYPSTFFEGGNEIRLYVNKEEKLDVLRQYVYMGLVEKNCKIQHVNAYLYAVLKGERELLEADWDSFGHKIGIRGEKIGPFNLVRVEDIPDGLPDGKLNAEVSAEDDAWLPLFLLGLYRVGRASETAYRTLLMESLIKQCKAIKSDWVSPVTATHKYFDVWGNDGNYLKIVACVDMFYNHFKKSIKATFRWGTIVSRFKDCAALATLGHVVKITGLTIEEVFTWVLQTEVAEELVKMMKPGQEIDNSSSYMPYLIDMGISAKSPYSTIKNPSFHFWGQLVAALCRSKRALNARQPDEIDSMSISNASLLMAYALGSSPDIEQQFSTGDTYRKPPKEASYLVSEEPKSRSVVEWIAWYSDVDNKPTDDMLMMAKRVAGTISGPRDNSVGKWIKQTYG.

In terms of assembly, homomultimerizes to form the nucleocapsid. Binds to viral genomic RNA. N in nucleocapsid binds the P protein and thereby positions the polymerase on the template. Interaction of N(0) with the P protein prevents the uncontrolled aggregation of N(0).

The protein resides in the virion. The protein localises to the host cytoplasm. Its function is as follows. Encapsidates the genome, protecting it from nucleases. The encapsidated genomic RNA is termed the NC and serves as template for transcription and replication. Nucleocapsid assembly is concomitant with replication, therefore viral replication depends on the intracellular concentration of free N, termed N(0). All replicative products are resistant to nucleases. The chain is Nucleoprotein (N) from Cyprinus carpio (Common carp).